Here is a 295-residue protein sequence, read N- to C-terminus: Lipase 2 (295 aa).

An N-terminal signal peptide occupies residues 1–31 (MPKPALRRVMTATVAAVGTLALGLTDATAHA). Catalysis depends on Ser-48, which acts as the Nucleophile. 3 cysteine pairs are disulfide-bonded: Cys-65–Cys-89, Cys-138–Cys-152, and Cys-205–Cys-254. His-275 is an active-site residue.

Belongs to the 'GDSL' lipolytic enzyme family. In terms of assembly, monomer.

It localises to the secreted. It carries out the reaction a triacylglycerol + H2O = a diacylglycerol + a fatty acid + H(+). Strongly inhibited by Ag(+). The cations Ca(2+) and Mg(2+) do not significantly reduce the lipolytic activity of SCO7513, whereas high concentrations of Co(2+) and Cu(2+) partially inhibit it. Is not inhibited by DTT in vitro. Is resistant to PMSF inhibition, except in the presence of Ca(2+). Catalyzes the hydrolysis of fatty acid esters with a preference for long chain fatty acids (C16-C18). This is Lipase 2 from Streptomyces coelicolor (strain ATCC BAA-471 / A3(2) / M145).